Here is an 83-residue protein sequence, read N- to C-terminus: Apolipoprotein C-I (83 aa).

An N-terminal signal peptide occupies residues Met1–Ala26.

The protein belongs to the apolipoprotein C1 family.

The protein localises to the secreted. Functionally, inhibitor of lipoprotein binding to the low density lipoprotein (LDL) receptor, LDL receptor-related protein, and very low density lipoprotein (VLDL) receptor. Associates with high density lipoproteins (HDL) and the triacylglycerol-rich lipoproteins in the plasma and makes up about 10% of the protein of the VLDL and 2% of that of HDL. Appears to interfere directly with fatty acid uptake and is also the major plasma inhibitor of cholesteryl ester transfer protein (CETP). Binds free fatty acids and reduces their intracellular esterification. Modulates the interaction of APOE with beta-migrating VLDL and inhibits binding of beta-VLDL to the LDL receptor-related protein. The sequence is that of Apolipoprotein C-I (APOC1) from Eonycteris spelaea (Lesser dawn bat).